A 452-amino-acid chain; its full sequence is Netrin-5 (452 aa).

The signal sequence occupies residues 1–34 (MTDYRTLFSSPGAGSTVTTPITLSLLLLLSQATS). 11 disulfides stabilise this stretch: Cys-173–Cys-182, Cys-175–Cys-191, Cys-193–Cys-202, Cys-205–Cys-225, Cys-228–Cys-240, Cys-230–Cys-247, Cys-249–Cys-258, Cys-261–Cys-275, Cys-298–Cys-376, Cys-302–Cys-378, and Cys-317–Cys-438. 2 consecutive Laminin EGF-like domains span residues 173–227 (CQCH…PCLP) and 228–277 (CQCH…PCQR). One can recognise an NTR domain in the interval 298-438 (CQGYCNVSVS…LQQKERGGAC (141 aa)). An N-linked (GlcNAc...) asparagine glycan is attached at Asn-303.

It is found in the secreted. In terms of biological role, plays a role in neurogenesis. Prevents motor neuron cell body migration out of the neural tube. The chain is Netrin-5 (Ntn5) from Mus musculus (Mouse).